The sequence spans 498 residues: ATP synthase subunit beta, chloroplastic (498 aa).

172-179 (GGAGVGKT) provides a ligand contact to ATP.

The protein belongs to the ATPase alpha/beta chains family. F-type ATPases have 2 components, CF(1) - the catalytic core - and CF(0) - the membrane proton channel. CF(1) has five subunits: alpha(3), beta(3), gamma(1), delta(1), epsilon(1). CF(0) has four main subunits: a(1), b(1), b'(1) and c(9-12).

It localises to the plastid. The protein resides in the chloroplast thylakoid membrane. The enzyme catalyses ATP + H2O + 4 H(+)(in) = ADP + phosphate + 5 H(+)(out). Produces ATP from ADP in the presence of a proton gradient across the membrane. The catalytic sites are hosted primarily by the beta subunits. This Liriodendron tulipifera (Tuliptree) protein is ATP synthase subunit beta, chloroplastic.